A 137-amino-acid polypeptide reads, in one-letter code: NADH-quinone oxidoreductase subunit A (137 aa).

A run of 3 helical transmembrane segments spans residues 12–32 (WGFA…LGLS), 66–86 (FYLV…LFAW), and 95–115 (WTGF…LVYL).

It belongs to the complex I subunit 3 family. As to quaternary structure, NDH-1 is composed of 13 different subunits. Subunits NuoA, H, J, K, L, M, N constitute the membrane sector of the complex.

It localises to the cell inner membrane. The catalysed reaction is a quinone + NADH + 5 H(+)(in) = a quinol + NAD(+) + 4 H(+)(out). Its function is as follows. NDH-1 shuttles electrons from NADH, via FMN and iron-sulfur (Fe-S) centers, to quinones in the respiratory chain. The immediate electron acceptor for the enzyme in this species is believed to be ubiquinone. Couples the redox reaction to proton translocation (for every two electrons transferred, four hydrogen ions are translocated across the cytoplasmic membrane), and thus conserves the redox energy in a proton gradient. The protein is NADH-quinone oxidoreductase subunit A of Pseudomonas savastanoi pv. phaseolicola (strain 1448A / Race 6) (Pseudomonas syringae pv. phaseolicola (strain 1448A / Race 6)).